Reading from the N-terminus, the 458-residue chain is Argininosuccinate lyase (458 aa).

Belongs to the lyase 1 family. Argininosuccinate lyase subfamily.

Its subcellular location is the cytoplasm. It carries out the reaction 2-(N(omega)-L-arginino)succinate = fumarate + L-arginine. It participates in amino-acid biosynthesis; L-arginine biosynthesis; L-arginine from L-ornithine and carbamoyl phosphate: step 3/3. The sequence is that of Argininosuccinate lyase from Glaesserella parasuis serovar 5 (strain SH0165) (Haemophilus parasuis).